The following is a 245-amino-acid chain: Nodulation protein G (245 aa).

Position 11-35 (11-35) interacts with NAD(+); the sequence is VTGASGGIGEAIARVLHAQGAIVGL. S139 contributes to the substrate binding site. The active-site Proton acceptor is Y152.

Belongs to the short-chain dehydrogenases/reductases (SDR) family.

Proposed to modify Nod factor fatty acyl chain. This is Nodulation protein G (nodG) from Rhizobium sp. (strain N33).